Consider the following 140-residue polypeptide: Nucleoside diphosphate kinase (140 aa).

Positions 11, 59, 87, 93, 104, and 114 each coordinate ATP. His117 (pros-phosphohistidine intermediate) is an active-site residue.

It belongs to the NDK family. In terms of assembly, homotetramer. It depends on Mg(2+) as a cofactor.

The protein localises to the cytoplasm. The catalysed reaction is a 2'-deoxyribonucleoside 5'-diphosphate + ATP = a 2'-deoxyribonucleoside 5'-triphosphate + ADP. It catalyses the reaction a ribonucleoside 5'-diphosphate + ATP = a ribonucleoside 5'-triphosphate + ADP. Major role in the synthesis of nucleoside triphosphates other than ATP. The ATP gamma phosphate is transferred to the NDP beta phosphate via a ping-pong mechanism, using a phosphorylated active-site intermediate. This Francisella tularensis subsp. mediasiatica (strain FSC147) protein is Nucleoside diphosphate kinase.